Here is a 667-residue protein sequence, read N- to C-terminus: Protein MAIN-LIKE 2 (667 aa).

N-acetylmethionine is present on Met-1. Residues 492 to 508 (MRGKERVRRKGMGKRRK) are compositionally biased toward basic residues. 2 disordered regions span residues 492–523 (MRGK…EDES) and 594–667 (KLQE…TVVA). The span at 512–523 (PMEDYGGSEDES) shows a compositional bias: acidic residues. Composition is skewed to basic and acidic residues over residues 608 to 618 (YDVKKEDKESK) and 656 to 667 (SLDRRGENTVVA).

As to expression, expressed in root tips, the shoot apical meristem (SAM), leaves, mature flowers and embryos.

The protein resides in the nucleus. Its function is as follows. Maybe required to maintain cell division activity in meristematic cells. The polypeptide is Protein MAIN-LIKE 2 (Arabidopsis thaliana (Mouse-ear cress)).